Here is a 355-residue protein sequence, read N- to C-terminus: S-adenosylmethionine:tRNA ribosyltransferase-isomerase (355 aa).

It belongs to the QueA family. Monomer.

It is found in the cytoplasm. It catalyses the reaction 7-aminomethyl-7-carbaguanosine(34) in tRNA + S-adenosyl-L-methionine = epoxyqueuosine(34) in tRNA + adenine + L-methionine + 2 H(+). It functions in the pathway tRNA modification; tRNA-queuosine biosynthesis. Its function is as follows. Transfers and isomerizes the ribose moiety from AdoMet to the 7-aminomethyl group of 7-deazaguanine (preQ1-tRNA) to give epoxyqueuosine (oQ-tRNA). The protein is S-adenosylmethionine:tRNA ribosyltransferase-isomerase of Burkholderia lata (strain ATCC 17760 / DSM 23089 / LMG 22485 / NCIMB 9086 / R18194 / 383).